A 428-amino-acid chain; its full sequence is Glutamyl-tRNA reductase (428 aa).

Residues 50-53, Ser-110, 115-117, and Gln-121 contribute to the substrate site; these read TCNR and ETQ. Cys-51 (nucleophile) is an active-site residue. 190-195 lines the NADP(+) pocket; that stretch reads GAGEMG.

This sequence belongs to the glutamyl-tRNA reductase family. As to quaternary structure, homodimer.

The enzyme catalyses (S)-4-amino-5-oxopentanoate + tRNA(Glu) + NADP(+) = L-glutamyl-tRNA(Glu) + NADPH + H(+). It functions in the pathway porphyrin-containing compound metabolism; protoporphyrin-IX biosynthesis; 5-aminolevulinate from L-glutamyl-tRNA(Glu): step 1/2. Catalyzes the NADPH-dependent reduction of glutamyl-tRNA(Glu) to glutamate 1-semialdehyde (GSA). In Campylobacter curvus (strain 525.92), this protein is Glutamyl-tRNA reductase.